The following is a 476-amino-acid chain: MNIKLLDKITPLEQDFAKWYTDVITKGNLATYGVLKGNIVFMPNSYGIWENVQSNFNKIIKELNVKNLYLPTLIPESLINSEKDHVQGFAPELITVEKVGDKVLNEKLFLRPTSEVLFAEYFKTQLNSYNDLPLLLNQWANVFRWEKTTSPFLRNSEFLWQEGHTSHYSEEEAHQFSKKMIQIYANFFEEFLAIPVIIGQKTESEKFAGAHTTYTIEAMMKDGRALQSGTSHYLGQNFAKAFDISFKDKDNSKSFVYQTSWGISTRLIGAIIMVHGDNRGIIMPPKIATNQVDIITVFANKNPEVLQKANDLFKTLKNDFRVRINDSNKSVGFKAAQSEIEGTPIRIEIGPEDLKQNKVILIRRDTQEKIDVKIDELKSEIFSQIEKIHENLLMQAKRLLNEKIVDVEDYESLKKEIAKGNFVRVPFDGDKKEEEIIKKETFATPRCIPLNFIGETKKCIMTNKETKRYVIFAKSY.

It belongs to the class-II aminoacyl-tRNA synthetase family. ProS type 3 subfamily. Homodimer.

It localises to the cytoplasm. The catalysed reaction is tRNA(Pro) + L-proline + ATP = L-prolyl-tRNA(Pro) + AMP + diphosphate. In terms of biological role, catalyzes the attachment of proline to tRNA(Pro) in a two-step reaction: proline is first activated by ATP to form Pro-AMP and then transferred to the acceptor end of tRNA(Pro). The sequence is that of Proline--tRNA ligase from Mycoplasma mobile (strain ATCC 43663 / 163K / NCTC 11711) (Mesomycoplasma mobile).